The primary structure comprises 504 residues: Beta-xylosidase (504 aa).

E160 serves as the catalytic Proton donor. The active-site Nucleophile is the E280.

This sequence belongs to the glycosyl hydrolase 39 family.

It carries out the reaction Hydrolysis of (1-&gt;4)-beta-D-xylans, to remove successive D-xylose residues from the non-reducing termini.. In Geobacillus stearothermophilus (Bacillus stearothermophilus), this protein is Beta-xylosidase (xynB).